The following is a 454-amino-acid chain: Jacalin-related lectin 37 (454 aa).

A Jacalin-type lectin domain is found at 295-438 (SRFTPPRGIQ…LTALGVHFSP (144 aa)).

Belongs to the jacalin lectin family.

The protein is Jacalin-related lectin 37 (JAL37) of Arabidopsis thaliana (Mouse-ear cress).